The following is a 516-amino-acid chain: RNA-binding region-containing protein 3 (516 aa).

4 disordered regions span residues 1-27, 106-130, 210-254, and 264-283; these read MAAP…RGDR, VHSP…DDKE, EDYM…DEDR, and ANLQ…RKKR. Phosphoserine is present on S21. The RRM 1 domain maps to 27-102; it reads RTLLVRHLPA…HTLVVEFAKE (76 aa). The residue at position 108 (S108) is a Phosphoserine. A compositionally biased stretch (basic and acidic residues) spans 115-130; the sequence is TEKKKRSDDPVEDDKE. Positions 217 to 230 are enriched in pro residues; it reads APLPPTSPQPPEEP. The span at 269–283 shows a compositional bias: basic residues; sequence KRPKPIKQRHVRKKR. The 84-residue stretch at 419–502 folds into the RRM 2 domain; it reads CRIYVKNLAK…KPMVVQFARS (84 aa).

Component of the U11/U12 snRNPs that are part of the U12-type spliceosome. Found in a complex with m(7)G-capped U12 snRNA. Interacts with PDCD7.

It localises to the nucleus. Functionally, participates in pre-mRNA U12-dependent splicing, performed by the minor spliceosome which removes U12-type introns. U12-type introns comprises less than 1% of all non-coding sequences. Binds to the 3'-stem-loop of m(7)G-capped U12 snRNA. The chain is RNA-binding region-containing protein 3 (RNPC3) from Bos taurus (Bovine).